A 426-amino-acid polypeptide reads, in one-letter code: Putative acid phosphatase 1 (426 aa).

Residues 1-18 (MRVLFYVFPFVIFALSQA) form the signal peptide. At 19–388 (QLISVHVIFR…HNWTMTTVSW (370 aa)) the chain is on the extracellular side. Histidine 29 acts as the Nucleophile in catalysis. N-linked (GlcNAc...) asparagine glycosylation is found at asparagine 37 and asparagine 145. The cysteines at positions 133 and 369 are disulfide-linked. The active-site Proton donor is aspartate 276. N-linked (GlcNAc...) asparagine glycosylation occurs at asparagine 380. A helical membrane pass occupies residues 389-409 (ILIGISAFLLIILIIMSYLAV). Residues 410–426 (RYKNRSVVTIKKVCLEN) lie on the Cytoplasmic side of the membrane.

It belongs to the histidine acid phosphatase family.

It is found in the membrane. The catalysed reaction is a phosphate monoester + H2O = an alcohol + phosphate. The polypeptide is Putative acid phosphatase 1 (Caenorhabditis briggsae).